The following is a 201-amino-acid chain: Single-stranded DNA-binding protein DdrA (201 aa).

This sequence belongs to the RAD52 family. The truncated form (1-160) of DdrA forms heptameric rings that can assemble into a 3-ring structure.

In terms of biological role, ssDNA-binding protein that contributes to the ionizing radiation resistance of D.deserti. Plays a role in DNA repair and genome reconstitution, in a RecA-independent process, since DdrA is essential for recovery from severe genomic fragmentation as a result of exposure to severe levels of ionizing radiation in an environment lacking nutrients. In vitro, binds to the 3'-ends of single-stranded DNA, and probably protects them from nuclease degradation. Thus, DdrA is part of a DNA end-protection system that helps to preserve genome integrity following irradiation or desiccation. The sequence is that of Single-stranded DNA-binding protein DdrA (ddrA) from Deinococcus deserti (strain DSM 17065 / CIP 109153 / LMG 22923 / VCD115).